A 644-amino-acid polypeptide reads, in one-letter code: Polyglycine hydrolase (644 aa).

Residues 1-23 (MYTSRSLFSTLASCLSLATLVAS) form the signal peptide. N-linked (GlcNAc...) asparagine glycosylation is found at N100, N144, N159, N244, and N340. A disulfide bridge connects residues C149 and C183. S369 is an active-site residue. N-linked (GlcNAc...) asparagine glycosylation is found at N389, N410, N443, and N486.

Belongs to the peptidase S12 family.

It localises to the secreted. It catalyses the reaction a glycyl-glycyl-[protein] + H2O = N-terminal glycyl-[protein] + [protein]-C-terminal glycine. With respect to regulation, not inhibited by phenylmethylsulfonyl fluoride (PMSF; serine peptidase class S1 inhibitor), clavulanic acid (beta-lactamase inhibitor) or ampicillin (penicillin-binding protein (PBP) inhibitor). Functionally, serine-type endopeptidase that cleaves Gly-Gly bonds in the polyglycine linker of host plant class IV chitinases to disrupt their chitin-binding, and thereby plays a role in lowering the defense responses of the host to the fungus. Degrades Z.mays Endochitinase A (CHIA). Has low proteolytic activity on Z.mays Endochitinase B (CHIB). The chain is Polyglycine hydrolase from Cochliobolus carbonum (strain 26-R-13) (Maize leaf spot fungus).